A 349-amino-acid polypeptide reads, in one-letter code: Ribosomal RNA small subunit methyltransferase H 1 (349 aa).

S-adenosyl-L-methionine contacts are provided by residues Gly79–His81, Asp99, Phe129, Asp148, and Gln155.

This sequence belongs to the methyltransferase superfamily. RsmH family.

It is found in the cytoplasm. The enzyme catalyses cytidine(1402) in 16S rRNA + S-adenosyl-L-methionine = N(4)-methylcytidine(1402) in 16S rRNA + S-adenosyl-L-homocysteine + H(+). Its function is as follows. Specifically methylates the N4 position of cytidine in position 1402 (C1402) of 16S rRNA. In Agathobacter rectalis (strain ATCC 33656 / DSM 3377 / JCM 17463 / KCTC 5835 / VPI 0990) (Eubacterium rectale), this protein is Ribosomal RNA small subunit methyltransferase H 1.